Here is a 254-residue protein sequence, read N- to C-terminus: NAD-dependent protein deacylase (254 aa).

Positions 1–250 (MERLEEARKR…LPPSPEDQAE (250 aa)) constitute a Deacetylase sirtuin-type domain. 22 to 41 (GAGISKPSGIPTFRDAEGLW) contacts NAD(+). Substrate-binding residues include Tyr66 and Arg69. An NAD(+)-binding site is contributed by 104 to 107 (QNVD). The active-site Proton acceptor is the His122. Zn(2+)-binding residues include Cys130, Cys133, Cys149, and Cys152. NAD(+)-binding positions include 189-191 (GTS), 215-217 (NPE), and Ala233.

Belongs to the sirtuin family. Class III subfamily. Zn(2+) serves as cofactor.

It localises to the cytoplasm. It catalyses the reaction N(6)-acetyl-L-lysyl-[protein] + NAD(+) + H2O = 2''-O-acetyl-ADP-D-ribose + nicotinamide + L-lysyl-[protein]. The enzyme catalyses N(6)-succinyl-L-lysyl-[protein] + NAD(+) + H2O = 2''-O-succinyl-ADP-D-ribose + nicotinamide + L-lysyl-[protein]. NAD-dependent lysine deacetylase and desuccinylase that specifically removes acetyl and succinyl groups on target proteins. Modulates the activities of several proteins which are inactive in their acylated form. The protein is NAD-dependent protein deacylase of Thermus thermophilus (strain ATCC 27634 / DSM 579 / HB8).